The sequence spans 451 residues: Trigger factor (451 aa).

Residues 165 to 250 form the PPIase FKBP-type domain; it reads DDKLTIDFEG…LHQIQAREVL (86 aa).

This sequence belongs to the FKBP-type PPIase family. Tig subfamily.

It localises to the cytoplasm. The enzyme catalyses [protein]-peptidylproline (omega=180) = [protein]-peptidylproline (omega=0). In terms of biological role, involved in protein export. Acts as a chaperone by maintaining the newly synthesized protein in an open conformation. Functions as a peptidyl-prolyl cis-trans isomerase. The sequence is that of Trigger factor from Helicobacter acinonychis (strain Sheeba).